Reading from the N-terminus, the 44-residue chain is Photosystem I reaction center subunit IX (44 aa).

The chain crosses the membrane as a helical span at residues 7-27 (YLSVAPVLSTLWFGSLAGLLI).

The protein belongs to the PsaJ family.

Its subcellular location is the plastid. It is found in the chloroplast thylakoid membrane. Its function is as follows. May help in the organization of the PsaE and PsaF subunits. The protein is Photosystem I reaction center subunit IX of Lactuca sativa (Garden lettuce).